A 255-amino-acid polypeptide reads, in one-letter code: 5'-nucleotidase SurE (255 aa).

D8, D9, S39, and N95 together coordinate a divalent metal cation.

This sequence belongs to the SurE nucleotidase family. A divalent metal cation is required as a cofactor.

The protein resides in the cytoplasm. It catalyses the reaction a ribonucleoside 5'-phosphate + H2O = a ribonucleoside + phosphate. In terms of biological role, nucleotidase that shows phosphatase activity on nucleoside 5'-monophosphates. This Thermosipho africanus (strain TCF52B) protein is 5'-nucleotidase SurE.